The primary structure comprises 95 residues: MKVSKEEVLHVAKLGQLDLDQEEVEMFQDKLSQILEWQEKLDELDLEGLEPTAHALERRNVTREDQVHNSLTNDKALENAPETEGNYFKVPRIIE.

The segment covering 55–67 has biased composition (basic and acidic residues); it reads ALERRNVTREDQV. Residues 55-83 are disordered; sequence ALERRNVTREDQVHNSLTNDKALENAPET.

It belongs to the GatC family. In terms of assembly, heterotrimer of A, B and C subunits.

It catalyses the reaction L-glutamyl-tRNA(Gln) + L-glutamine + ATP + H2O = L-glutaminyl-tRNA(Gln) + L-glutamate + ADP + phosphate + H(+). It carries out the reaction L-aspartyl-tRNA(Asn) + L-glutamine + ATP + H2O = L-asparaginyl-tRNA(Asn) + L-glutamate + ADP + phosphate + 2 H(+). In terms of biological role, allows the formation of correctly charged Asn-tRNA(Asn) or Gln-tRNA(Gln) through the transamidation of misacylated Asp-tRNA(Asn) or Glu-tRNA(Gln) in organisms which lack either or both of asparaginyl-tRNA or glutaminyl-tRNA synthetases. The reaction takes place in the presence of glutamine and ATP through an activated phospho-Asp-tRNA(Asn) or phospho-Glu-tRNA(Gln). This is Aspartyl/glutamyl-tRNA(Asn/Gln) amidotransferase subunit C from Natranaerobius thermophilus (strain ATCC BAA-1301 / DSM 18059 / JW/NM-WN-LF).